Reading from the N-terminus, the 70-residue chain is MRVSPSRSWSLYCSHHRQTRVSQVLAHSSSILMLQMHSGSFGNLNNDTSCRGRHHRNPNRHSYCFSNLAP.

This is an uncharacterized protein from Saccharomyces cerevisiae (strain ATCC 204508 / S288c) (Baker's yeast).